The following is a 107-amino-acid chain: Probable insulin-like peptide beta-type 3 (107 aa).

Residues 1-19 (MKLSVVLALFIIFQLGAAS) form the signal peptide. Positions 20 to 55 (LMRNWMFDFEKELEHDYDDSEIGFHNIHSLMARSRR) are excised as a propeptide. 4 cysteine pairs are disulfide-bonded: cysteine 62–cysteine 90, cysteine 74–cysteine 103, cysteine 78–cysteine 104, and cysteine 89–cysteine 94.

It belongs to the insulin family.

The protein resides in the secreted. This Caenorhabditis elegans protein is Probable insulin-like peptide beta-type 3 (ins-3).